The following is an 815-amino-acid chain: Phenylalanine--tRNA ligase beta subunit (815 aa).

Positions 39 to 153 (ASHAQGVVVG…NVPDLGQPVG (115 aa)) constitute a tRNA-binding domain. A B5 domain is found at 414–498 (KSAEPVKLRR…RLVGFDRFEA (85 aa)). The Mg(2+) site is built by D476, D482, E485, and E486. The FDX-ACB domain maps to 721–814 (PTVPAMELDL…LVKQFSAELR (94 aa)).

It belongs to the phenylalanyl-tRNA synthetase beta subunit family. Type 1 subfamily. As to quaternary structure, tetramer of two alpha and two beta subunits. The cofactor is Mg(2+).

Its subcellular location is the cytoplasm. The enzyme catalyses tRNA(Phe) + L-phenylalanine + ATP = L-phenylalanyl-tRNA(Phe) + AMP + diphosphate + H(+). This is Phenylalanine--tRNA ligase beta subunit from Prochlorococcus marinus (strain MIT 9313).